The primary structure comprises 966 residues: Glycine dehydrogenase (decarboxylating) (966 aa).

Lys-713 is modified (N6-(pyridoxal phosphate)lysine).

The protein belongs to the GcvP family. The glycine cleavage system is composed of four proteins: P, T, L and H. Pyridoxal 5'-phosphate serves as cofactor.

The enzyme catalyses N(6)-[(R)-lipoyl]-L-lysyl-[glycine-cleavage complex H protein] + glycine + H(+) = N(6)-[(R)-S(8)-aminomethyldihydrolipoyl]-L-lysyl-[glycine-cleavage complex H protein] + CO2. Functionally, the glycine cleavage system catalyzes the degradation of glycine. The P protein binds the alpha-amino group of glycine through its pyridoxal phosphate cofactor; CO(2) is released and the remaining methylamine moiety is then transferred to the lipoamide cofactor of the H protein. This Psychromonas ingrahamii (strain DSM 17664 / CCUG 51855 / 37) protein is Glycine dehydrogenase (decarboxylating).